Consider the following 388-residue polypeptide: Mannitol-1-phosphate 5-dehydrogenase (388 aa).

5-16 (AIQFGGGNIGRG) contributes to the NAD(+) binding site. The active site involves K213.

Belongs to the mannitol dehydrogenase family. Monomer.

The enzyme catalyses D-mannitol 1-phosphate + NAD(+) = beta-D-fructose 6-phosphate + NADH + H(+). Catalyzes the NAD(H)-dependent interconversion of D-fructose 6-phosphate and D-mannitol 1-phosphate in the mannitol metabolic pathway. The protein is Mannitol-1-phosphate 5-dehydrogenase (mpdA) of Aspergillus clavatus (strain ATCC 1007 / CBS 513.65 / DSM 816 / NCTC 3887 / NRRL 1 / QM 1276 / 107).